The following is a 219-amino-acid chain: Ribose-5-phosphate isomerase A (219 aa).

Residues 28–31 (SGST), 81–84 (DGAD), and 94–97 (KGGG) contribute to the substrate site. The active-site Proton acceptor is E103. K121 is a substrate binding site.

It belongs to the ribose 5-phosphate isomerase family. Homodimer.

It carries out the reaction aldehydo-D-ribose 5-phosphate = D-ribulose 5-phosphate. Its pathway is carbohydrate degradation; pentose phosphate pathway; D-ribose 5-phosphate from D-ribulose 5-phosphate (non-oxidative stage): step 1/1. Catalyzes the reversible conversion of ribose-5-phosphate to ribulose 5-phosphate. The chain is Ribose-5-phosphate isomerase A from Histophilus somni (strain 129Pt) (Haemophilus somnus).